The primary structure comprises 64 residues: Bowman-Birk type trypsin inhibitor TI1 (64 aa).

5 disulfide bridges follow: Cys-9/Cys-61, Cys-10/Cys-25, Cys-15/Cys-23, Cys-32/Cys-39, and Cys-36/Cys-49.

This sequence belongs to the Bowman-Birk serine protease inhibitor family.

This chain is Bowman-Birk type trypsin inhibitor TI1, found in Coix lacryma-jobi (Job's tears).